A 573-amino-acid chain; its full sequence is Vacuolar protein 8 (573 aa).

Positions 1–36 are disordered; sequence MAASAADRMGRQRMSGLSCSAPPRPTVVTNPGNKQD. Positions 27-36 are enriched in polar residues; sequence VVTNPGNKQD. ARM repeat units lie at residues 60 to 97, 98 to 137, 139 to 178, 180 to 219, 221 to 260, 264 to 303, 305 to 344, 346 to 386, and 430 to 469; these read NRGE…FAEI, TEKD…NLAV, NENK…NLAT, EANK…NMTH, DQNR…NIAV, NRKK…NLAS, SDYQ…NISI, PLNE…NLAA, and DELK…NLSS.

Belongs to the beta-catenin family.

It localises to the vacuole membrane. Functionally, functions in both vacuole inheritance and protein targeting from the cytoplasm to vacuole. This Yarrowia lipolytica (strain CLIB 122 / E 150) (Yeast) protein is Vacuolar protein 8 (VAC8).